The following is a 375-amino-acid chain: Cinnamyl alcohol dehydrogenase 3 (375 aa).

Zn(2+) is bound at residue cysteine 44. Serine 46 serves as a coordination point for NADP(+). Residues histidine 66, glutamate 67, cysteine 97, cysteine 100, cysteine 103, cysteine 111, and cysteine 160 each coordinate Zn(2+). NADP(+) contacts are provided by residues threonine 164, 186–191 (GLGGLG), 209–214 (SRSSEK), threonine 249, glycine 273, and 296–298 (SQI).

The protein belongs to the zinc-containing alcohol dehydrogenase family. Homodimer. It depends on Zn(2+) as a cofactor. In terms of tissue distribution, expressed in the root tips. Expressed in the apical meristematic regions, leaf veins and at the base of the trichomes. Expressed at the base of the stems. Expressed in the abscission zones of newly formed siliques.

It carries out the reaction (E)-cinnamyl alcohol + NADP(+) = (E)-cinnamaldehyde + NADPH + H(+). The enzyme catalyses (E)-coniferol + NADP(+) = (E)-coniferaldehyde + NADPH + H(+). It catalyses the reaction (E)-sinapyl alcohol + NADP(+) = (E)-sinapaldehyde + NADPH + H(+). The catalysed reaction is (E)-4-coumaroyl alcohol + NADP(+) = (E)-4-coumaraldehyde + NADPH + H(+). It carries out the reaction (E)-caffeyl alcohol + NADP(+) = (E)-caffeyl aldehyde + NADPH + H(+). The protein operates within aromatic compound metabolism; phenylpropanoid biosynthesis. In terms of biological role, involved in lignin biosynthesis. Catalyzes the final step specific for the production of lignin monomers. Catalyzes the NADPH-dependent reduction of coniferaldehyde, 5-hydroxyconiferaldehyde, sinapaldehyde, 4-coumaraldehyde and caffeyl aldehyde to their respective alcohols. The protein is Cinnamyl alcohol dehydrogenase 3 of Arabidopsis thaliana (Mouse-ear cress).